The sequence spans 383 residues: uncharacterized protein (383 aa).

Disordered stretches follow at residues 1-30 (MDLC…PTCT), 114-144 (ETKP…STAS), 262-289 (GEKR…ARTS), and 341-360 (AKDP…NSPQ). A compositionally biased stretch (acidic residues) spans 10–26 (DLENGENNEIQSTEETE). The segment covering 128–141 (SSPSQTQAAPQGPS) has biased composition (low complexity). Residues 262-271 (GEKRPSELAK) are compositionally biased toward basic and acidic residues.

This is an uncharacterized protein from Macaca fascicularis (Crab-eating macaque).